Consider the following 1500-residue polypeptide: MMMARKQDVRIPTYNISVVGLSGTEKEKGQCGIGKSCLCNRFVRPSADEFHLDHTSVLSTSDFGGRVVNNDHFLYWGEVSRSLEDCVECKMHIVEQTEFIDDQTFQPHRSTALQPYIKRAAATKLASAEKLMYFCTDQLGLEQDFEQKQMPDGKLLIDGFLLGIDVSRGMNRNFDDQLKFVSNLYNQLAKTKKPIVVVLTKCDEGVERYIRDAHTFALSKKNLQVVETSARSNVNVDLAFSTLVQLIDKSRGKTKIIPYFEALKQQSQQIATAKDKYEWLVSRIVKNHNENWLSVSRKMQASPEYQDYVYLEGTQKAKKLFLQHIHRLKHEHIERRRKLYLAALPLAFEALIPNLDEIDHLSCIKTKKLLETKPEFLKWFVVLEETPWDATSHIDNMENERIPFDLMDTVPAEQLYEAHLEKLRNERKRAEMRRAFKENLETSPFITPGKPWEEARSFIMNEDFYQWLEESVYMDIYGKHQKQIIDKAKEEFQELLLEYSELFYELELDAKPSKEKMGVIQDVLGEEQRFKALQKLQAERDALILKHIHFVYHPTKETCPSCPACVDAKIEHLISSRFIRPSDRNQKNSLSDPNIDRINLVILGKDGLARELANEIRALCTNDDKYVIDGKMYELSLRPIEGNVRLPVNSFQTPTFQPHGCLCLYNSKESLSYVVESIEKSRESTLGRRDNHLVHLPLTLILVNKRGDTSGETLHSLIQQGQQIASKLQCVFLDPASAGIGYGRNINEKQISQVLKGLLDSKRNLNLVSSTASIKDLADVDLRIVMCLMCGDPFSADDILFPVLQSQTCKSSHCGSNNSVLLELPIGLHKKRIELSILSYHSSFSIRKSRLVHGYIVFYSAKRKASLAMLRAFLCEVQDIIPIQLVALTDGAIDVLDNDLSREQLSEGEEIAQEIDGRFTSIPCSQPQHKLEIFHPFFKDVVDKKNIIEATHMYDNAAEACSTTEEVFNSPRAGSPLCNSNLQDSEEDIEPPSYSLFREDTSLPSLSKDHSKLSMELEGNDGLSFIMSNFESKLNNKVPPPVKPKPPVQFDITKGDLSYLDQGHRDGQRKSVSSSTWLPPDGFDPSDYAEPMDAVVKPRNEEENIYSVPHDSTQGKIITIRNINKAQSNGSGNGSDSEMDTSSLERGRKVSIVSKPVLYRTRCSRLGRFASYRTSFSVGSDDELGPIRKKEEDQASQGYKGDNAVIPYETDEDPRRRNILRSLRRNTKKPKPKPRPSITKATWESNYFGVPLTTVVTPEKPIPVFIERCIEYIEATGLSTEGIYRVSGNKSEMESLQRQFDQDHNLDLAEKDFTVNTVAGAMKSFFSELPDPLVPYNMQIDLVEAHKINDREQKLHALKEVLKKFPKENHEVFKYVISHLNKVSHNNKVNLMTSENLSICFWPTLMRPDFSTMDALTATRTYQTIIELFIQQCPFFFHNRPISEPPGATPSSPSAVASTVPFLTSTPVTSQPSPPQSPPPTPQSPMQALLPSQLQAEHTL.

Positions 1–266 (MMMARKQDVR…IPYFEALKQQ (266 aa)) are has GTPase activity, required for proper localization. GTP-binding positions include lysine 28, 33 to 37 (IGKSC), leucine 52, serine 56, 95 to 97 (EQT), 201 to 203 (KCD), and 229 to 231 (SAR). 4 FF domains span residues 270 to 327 (IATA…HIHR), 368 to 422 (KLLE…HLEK), 429 to 483 (RAEM…HQKQ), and 485 to 550 (IDKA…HIHF). At tyrosine 308 the chain carries Phosphotyrosine. Phosphoserine is present on serine 589. Positions 592-767 (DPNIDRINLV…LLDSKRNLNL (176 aa)) constitute a pG1 pseudoGTPase domain. Residues serine 770 and serine 773 each carry the phosphoserine modification. A pG2 pseudoGTPase domain is found at 783 to 947 (RIVMCLMCGD…FKDVVDKKNI (165 aa)). A phosphoserine mark is found at serine 970, serine 975, serine 985, serine 1002, and serine 1073. The disordered stretch occupies residues 970–989 (SPRAGSPLCNSNLQDSEEDI). A disordered region spans residues 1058-1090 (SYLDQGHRDGQRKSVSSSTWLPPDGFDPSDYAE). Tyrosine 1088 is subject to Phosphotyrosine. Position 1106 is a phosphotyrosine; by ABL2 and PTK6 (tyrosine 1106). Residues 1125–1142 (KAQSNGSGNGSDSEMDTS) are compositionally biased toward polar residues. The disordered stretch occupies residues 1125-1147 (KAQSNGSGNGSDSEMDTSSLERG). Phosphoserine is present on residues serine 1135, serine 1143, serine 1151, serine 1177, serine 1180, and serine 1222. Residues 1178 to 1208 (VGSDDELGPIRKKEEDQASQGYKGDNAVIPY) are disordered. The tract at residues 1214–1237 (PRRRNILRSLRRNTKKPKPKPRPS) is required for phospholipid binding and regulation of the substrate preference. At threonine 1227 the chain carries Phosphothreonine. Phosphoserine is present on serine 1237. The region spanning 1250–1437 (VPLTTVVTPE…LFIQQCPFFF (188 aa)) is the Rho-GAP domain. Positions 1444 to 1500 (EPPGATPSSPSAVASTVPFLTSTPVTSQPSPPQSPPPTPQSPMQALLPSQLQAEHTL) are disordered. Residues 1449–1471 (TPSSPSAVASTVPFLTSTPVTSQ) are compositionally biased toward low complexity. Pro residues predominate over residues 1472–1483 (PSPPQSPPPTPQ). A phosphoserine mark is found at serine 1473 and serine 1477. Threonine 1481 bears the Phosphothreonine mark. A Phosphoserine modification is found at serine 1484. Polar residues predominate over residues 1490 to 1500 (LPSQLQAEHTL).

Interacts with RASA1. Interacts with the general transcription factor GTF2I, the interaction sequesters GTF2I in the cytoplasm. Phosphorylation of Tyr-1106 by PTK6 promotes the association with RASA1, inactivating RHOA while activating RAS. Phosphorylation at Tyr-308 by PDGFRA inhibits binding to GTF2I. Phosphorylated by PRKCA at Ser-1222 and Thr-1227, induces relocalization from the cytoplasm to regions of plasma membrane ruffling and prevents the binding and substrate specificity regulation by phospholipids. In brain, phosphorylated by FYN and SRC. During focal adhesion formation, phosphorylated by MAPK1 and MAPK3 at the C-terminal region, probably at Ser-1452, Ser-1477, Thr-1481 and Ser-1484. Phosphorylation by MAPK1 and MAPK3 inhibits GAP function and localizes ARGHAP35 away from newly forming focal adhesions and stress fibers in cells spreading on fibronectin. Phosphorylation at Ser-1477 and Thr-1481 by GSK3B requires priming by MAPK and inhibits RhoGAP activity and modulates polarized cell migration. As to expression, strongly expressed in retina (photoreceptor layer) and brain. Expression is maximal in the occipital, frontal, temporal lobe and also the cerebellum. Medium expression in the medulla and also in kidney, lung, liver, heart and spleen.

It is found in the cytoplasm. The protein localises to the cytoskeleton. The protein resides in the cilium basal body. Its subcellular location is the nucleus. It localises to the cell membrane. Rho GTPase-activating protein (GAP). Binds several acidic phospholipids which inhibits the Rho GAP activity to promote the Rac GAP activity. This binding is inhibited by phosphorylation by PRKCA. Involved in cell differentiation as well as cell adhesion and migration, plays an important role in retinal tissue morphogenesis, neural tube fusion, midline fusion of the cerebral hemispheres and mammary gland branching morphogenesis. Transduces signals from p21-ras to the nucleus, acting via the ras GTPase-activating protein (GAP). Transduces SRC-dependent signals from cell-surface adhesion molecules, such as laminin, to promote neurite outgrowth. Regulates axon outgrowth, guidance and fasciculation. Modulates Rho GTPase-dependent F-actin polymerization, organization and assembly, is involved in polarized cell migration and in the positive regulation of ciliogenesis and cilia elongation. During mammary gland development, is required in both the epithelial and stromal compartments for ductal outgrowth. Represses transcription of the glucocorticoid receptor by binding to the cis-acting regulatory sequence 5'-GAGAAAAGAAACTGGAGAAACTC-3'; this function is however unclear and would need additional experimental evidences. This is Rho GTPase-activating protein 35 from Canis lupus familiaris (Dog).